The sequence spans 407 residues: Nuclear hormone receptor family member nhr-86 (407 aa).

The segment at residues 21–96 is a DNA-binding region (nuclear receptor); sequence KSTCSICRED…VGMNPAGVQQ (76 aa). 2 consecutive NR C4-type zinc fingers follow at residues 24-44 and 60-79; these read CSICREDGDGYHFGAEACRAC and CRGNNDCEITANIRCMCRSC. The 276-residue stretch at 130–405 folds into the NR LBD domain; it reads AQSALVEDLH…KDFYDLVNGK (276 aa). The interval 394 to 405 is AF-2; the sequence is PPKDFYDLVNGK.

It belongs to the nuclear hormone receptor family. In terms of tissue distribution, expressed in intestinal epithelial cells, excretory gland cells and in several head neurons.

The protein localises to the nucleus. Its function is as follows. Nuclear receptor which acts as a transcription activator. Binds small molecule ligands, such as phenazine 1-carboxamide (PCN), a pathogen-derived metabolite, leading to modulation of innate immune responses against virulent pathogens. On exposure to exogenous PCN, P.aeruginosa and other xenobiotic immunostimulant such as R24, activates immune response genes, including irg-4, irg-5, mul-1, drd-50, cyp-35C1 and ugt-30, probably via direct interaction with their promoters, and independent of the p38 MAPK pmk-1 pathway. Exhibits higher affinity to R24 than PCN and thus induces stronger immune response. Binds its own promoter thereby autoregulating its expression in the head hypodermis and the pharynx. Possibly plays a role in lipid storage or catabolism. The protein is Nuclear hormone receptor family member nhr-86 (nhr-86) of Caenorhabditis elegans.